Reading from the N-terminus, the 519-residue chain is Spermidine/putrescine import ATP-binding protein PotA (519 aa).

In terms of domain architecture, ABC transporter spans L6–I401. G39 to T46 contributes to the ATP binding site. The tract at residues R107–R270 is insert.

It belongs to the ABC transporter superfamily. Spermidine/putrescine importer (TC 3.A.1.11.1) family. The complex is composed of two ATP-binding proteins (PotA), two transmembrane proteins (PotB and PotC) and a solute-binding protein (PotD).

The protein resides in the cell membrane. The catalysed reaction is ATP + H2O + polyamine-[polyamine-binding protein]Side 1 = ADP + phosphate + polyamineSide 2 + [polyamine-binding protein]Side 1.. In terms of biological role, part of the ABC transporter complex PotABCD involved in spermidine/putrescine import. Responsible for energy coupling to the transport system. The chain is Spermidine/putrescine import ATP-binding protein PotA from Ureaplasma parvum serovar 3 (strain ATCC 700970).